The following is a 245-amino-acid chain: Small ribosomal subunit protein uS2 (245 aa).

The protein belongs to the universal ribosomal protein uS2 family.

The polypeptide is Small ribosomal subunit protein uS2 (Dehalococcoides mccartyi (strain CBDB1)).